A 26-amino-acid polypeptide reads, in one-letter code: MPEQKANCSPNGNITVDSMIMSLGSS.

The span at 1–16 shows a compositional bias: polar residues; it reads MPEQKANCSPNGNITV. The interval 1 to 26 is disordered; sequence MPEQKANCSPNGNITVDSMIMSLGSS.

This is an uncharacterized protein from Saccharomyces cerevisiae (strain ATCC 204508 / S288c) (Baker's yeast).